The following is a 324-amino-acid chain: Glyoxylate/hydroxypyruvate reductase B (324 aa).

Residues R237 and E266 contribute to the active site. H285 serves as the catalytic Proton donor.

It belongs to the D-isomer specific 2-hydroxyacid dehydrogenase family. GhrB subfamily. In terms of assembly, homodimer.

Its subcellular location is the cytoplasm. It carries out the reaction glycolate + NADP(+) = glyoxylate + NADPH + H(+). The enzyme catalyses (R)-glycerate + NAD(+) = 3-hydroxypyruvate + NADH + H(+). The catalysed reaction is (R)-glycerate + NADP(+) = 3-hydroxypyruvate + NADPH + H(+). Functionally, catalyzes the NADPH-dependent reduction of glyoxylate and hydroxypyruvate into glycolate and glycerate, respectively. This Escherichia coli (strain K12 / MC4100 / BW2952) protein is Glyoxylate/hydroxypyruvate reductase B.